We begin with the raw amino-acid sequence, 1057 residues long: Carbamoyl phosphate synthase large chain (1057 aa).

Residues 1-401 (MPKRNDIKTI…SLLKAIRSLE (401 aa)) are carboxyphosphate synthetic domain. ATP contacts are provided by Arg129, Arg169, Gly175, Gly176, Lys208, Ile210, Glu215, Gly241, Ile242, His243, Gln284, and Glu298. In terms of domain architecture, ATP-grasp 1 spans 133-327 (RTLMNDLNVP…IAKLAAKIAV (195 aa)). Residues Gln284, Glu298, and Asn300 each coordinate Mg(2+). Positions 284, 298, and 300 each coordinate Mn(2+). An oligomerization domain region spans residues 402–546 (YGVHHLGLPN…YGTYETENES (145 aa)). Residues 547–929 (IVTDKEKILV…ALFKGLTGSG (383 aa)) are carbamoyl phosphate synthetic domain. The ATP-grasp 2 domain maps to 671–861 (EALLRKINVP…MAQLAMRAII (191 aa)). ATP is bound by residues Arg707, Arg746, Leu748, Glu752, Gly777, Val778, His779, Ser780, Gln820, and Glu832. Residues Gln820, Glu832, and Asn834 each coordinate Mg(2+). Residues Gln820, Glu832, and Asn834 each coordinate Mn(2+). An MGS-like domain is found at 930–1057 (VEVKDHGTVL…ESMTFTMRQM (128 aa)). Residues 930-1057 (VEVKDHGTVL…ESMTFTMRQM (128 aa)) form an allosteric domain region.

Belongs to the CarB family. In terms of assembly, composed of two chains; the small (or glutamine) chain promotes the hydrolysis of glutamine to ammonia, which is used by the large (or ammonia) chain to synthesize carbamoyl phosphate. Tetramer of heterodimers (alpha,beta)4. The cofactor is Mg(2+). Mn(2+) serves as cofactor.

The catalysed reaction is hydrogencarbonate + L-glutamine + 2 ATP + H2O = carbamoyl phosphate + L-glutamate + 2 ADP + phosphate + 2 H(+). The enzyme catalyses hydrogencarbonate + NH4(+) + 2 ATP = carbamoyl phosphate + 2 ADP + phosphate + 2 H(+). The protein operates within amino-acid biosynthesis; L-arginine biosynthesis; carbamoyl phosphate from bicarbonate: step 1/1. It participates in pyrimidine metabolism; UMP biosynthesis via de novo pathway; (S)-dihydroorotate from bicarbonate: step 1/3. Large subunit of the glutamine-dependent carbamoyl phosphate synthetase (CPSase). CPSase catalyzes the formation of carbamoyl phosphate from the ammonia moiety of glutamine, carbonate, and phosphate donated by ATP, constituting the first step of 2 biosynthetic pathways, one leading to arginine and/or urea and the other to pyrimidine nucleotides. The large subunit (synthetase) binds the substrates ammonia (free or transferred from glutamine from the small subunit), hydrogencarbonate and ATP and carries out an ATP-coupled ligase reaction, activating hydrogencarbonate by forming carboxy phosphate which reacts with ammonia to form carbamoyl phosphate. The protein is Carbamoyl phosphate synthase large chain of Staphylococcus aureus (strain MW2).